A 1072-amino-acid polypeptide reads, in one-letter code: Carbamoyl phosphate synthase large chain (1072 aa).

The interval 1–401 is carboxyphosphate synthetic domain; the sequence is MPKRLDINTI…SLLKAVRSLE (401 aa). ATP is bound by residues Arg129, Arg169, Gly175, Gly176, Lys208, Ile210, Glu215, Gly241, Val242, His243, Gln284, and Glu298. In terms of domain architecture, ATP-grasp 1 spans 133–327; it reads RTLMQELNEP…IAKLAAKIAV (195 aa). Residues Gln284, Glu298, and Asn300 each coordinate Mg(2+). 3 residues coordinate Mn(2+): Gln284, Glu298, and Asn300. An oligomerization domain region spans residues 402–546; that stretch reads LGIYHLELDH…YSTYADENES (145 aa). A carbamoyl phosphate synthetic domain region spans residues 547–929; it reads IVTDRKSVVV…ALYKGLVASG (383 aa). Residues 671 to 861 enclose the ATP-grasp 2 domain; that stretch reads EAALTKLGIP…MANVATKVIL (191 aa). ATP contacts are provided by Arg707, Arg746, Glu752, Gly777, Val778, His779, Ser780, Gln820, and Glu832. Mg(2+)-binding residues include Gln820, Glu832, and Asn834. Residues Gln820, Glu832, and Asn834 each coordinate Mn(2+). The MGS-like domain maps to 930–1072; that stretch reads INIPTHGSVI…QTKRHEVVHA (143 aa). Residues 930–1072 are allosteric domain; the sequence is INIPTHGSVI…QTKRHEVVHA (143 aa).

It belongs to the CarB family. As to quaternary structure, composed of two chains; the small (or glutamine) chain promotes the hydrolysis of glutamine to ammonia, which is used by the large (or ammonia) chain to synthesize carbamoyl phosphate. Tetramer of heterodimers (alpha,beta)4. The cofactor is Mg(2+). Requires Mn(2+) as cofactor.

It carries out the reaction hydrogencarbonate + L-glutamine + 2 ATP + H2O = carbamoyl phosphate + L-glutamate + 2 ADP + phosphate + 2 H(+). The enzyme catalyses hydrogencarbonate + NH4(+) + 2 ATP = carbamoyl phosphate + 2 ADP + phosphate + 2 H(+). Its pathway is amino-acid biosynthesis; L-arginine biosynthesis; carbamoyl phosphate from bicarbonate: step 1/1. The protein operates within pyrimidine metabolism; UMP biosynthesis via de novo pathway; (S)-dihydroorotate from bicarbonate: step 1/3. Large subunit of the glutamine-dependent carbamoyl phosphate synthetase (CPSase). CPSase catalyzes the formation of carbamoyl phosphate from the ammonia moiety of glutamine, carbonate, and phosphate donated by ATP, constituting the first step of 2 biosynthetic pathways, one leading to arginine and/or urea and the other to pyrimidine nucleotides. The large subunit (synthetase) binds the substrates ammonia (free or transferred from glutamine from the small subunit), hydrogencarbonate and ATP and carries out an ATP-coupled ligase reaction, activating hydrogencarbonate by forming carboxy phosphate which reacts with ammonia to form carbamoyl phosphate. The sequence is that of Carbamoyl phosphate synthase large chain from Bacillus cereus (strain AH820).